The sequence spans 137 residues: Envelope glycoprotein L (137 aa).

The first 25 residues, 1–25 (MRTVGVFLATCLVTIFVLPTWGNWA), serve as a signal peptide directing secretion. The interval 23–128 (NWAYPCCHVT…SVEDLFGANL (106 aa)) is interaction with gH. 2 cysteine pairs are disulfide-bonded: C28–C56 and C29–C79.

Belongs to the herpesviridae glycoprotein L family. Interacts with glycoprotein H (gH); this interaction is necessary for the correct processing and cell surface expression of gH. The heterodimer gH/gL seems to interact with gB trimers during fusion. The heterodimer gH/gL interacts with host EPHA2 to facilitate virus internalization and fusion.

The protein resides in the virion membrane. The protein localises to the host cell membrane. It localises to the host Golgi apparatus. Its subcellular location is the host trans-Golgi network. Functionally, the heterodimer glycoprotein H-glycoprotein L is required for the fusion of viral and plasma membranes leading to virus entry into the host cell. Acts as a functional inhibitor of gH and maintains gH in an inhibited form. Upon binding to host integrins, gL dissociates from gH leading to activation of the viral fusion glycoproteins gB and gH. The heterodimer gH/gL targets also host EPHA2 to promote viral entry. The polypeptide is Envelope glycoprotein L (Epstein-Barr virus (strain AG876) (HHV-4)).